The following is a 465-amino-acid chain: 23S rRNA (uracil(1939)-C(5))-methyltransferase RlmD (465 aa).

The disordered stretch occupies residues 1 to 24 (MSEAVPLSTRRASSAGDAPGRAPV). The TRAM domain occupies 16-80 (GDAPGRAPVL…PTYEQAQVVD (65 aa)). [4Fe-4S] cluster-binding residues include cysteine 93, cysteine 99, cysteine 102, and cysteine 181. Residues glutamine 289, phenylalanine 318, asparagine 323, glutamate 339, asparagine 367, and aspartate 388 each contribute to the S-adenosyl-L-methionine site. Cysteine 421 functions as the Nucleophile in the catalytic mechanism.

Belongs to the class I-like SAM-binding methyltransferase superfamily. RNA M5U methyltransferase family. RlmD subfamily.

It catalyses the reaction uridine(1939) in 23S rRNA + S-adenosyl-L-methionine = 5-methyluridine(1939) in 23S rRNA + S-adenosyl-L-homocysteine + H(+). Functionally, catalyzes the formation of 5-methyl-uridine at position 1939 (m5U1939) in 23S rRNA. The chain is 23S rRNA (uracil(1939)-C(5))-methyltransferase RlmD from Burkholderia mallei (strain ATCC 23344).